A 1185-amino-acid chain; its full sequence is Syntaxin-binding protein 5-like (1185 aa).

Residue methionine 1 is modified to N-acetylmethionine. The interval 15-44 is disordered; that stretch reads ASSPGSGSSSGSNSGGAGSGSVHPGGTAGL. The span at 16–26 shows a compositional bias: low complexity; that stretch reads SSPGSGSSSGS. WD repeat units lie at residues 73-106, 113-152, 157-193, 212-246, 252-284, 306-348, 356-390, 412-489, 517-628, and 642-704; these read TALAFDPVQKILAIGTRTGAIRILGRPGVDCYCQ, VLQLQFLINEGALVSASSDDTLHLWNLRQKRPAILHSLKF, ITYCHLPFQSKWLYVGTERGNTHIVNIESFILSGYVI, HLSDSPRDEGKLLIGYENGTVVFWDLKSKRAELRV, IHSIDWHHEGKQFMCSHSDGSLTLWNLKSPSRP, PILK…KAIT, IVEFLTLCETPYPNEFQEPYAVAVLLEKDLIVVDL, TCTA…YKLK, QMIY…DLVI, and TSLS…IADN. At threonine 567 the chain carries Phosphothreonine. Residues 567 to 601 are disordered; the sequence is TPEPETSPPFPDLSSQLPPSRSLSGSTNTVSSEGV. Residues serine 573, serine 588, and serine 592 each carry the phosphoserine modification. Residues 578-592 show a composition bias toward low complexity; that stretch reads DLSSQLPPSRSLSGS. Threonine 595 bears the Phosphothreonine mark. Position 598 is a phosphoserine (serine 598). Arginine 708 is subject to Omega-N-methylarginine. A compositionally biased stretch (polar residues) spans 747–768; sequence TSDHVNGHCTSPTSQSCSSGKR. The tract at residues 747–770 is disordered; that stretch reads TSDHVNGHCTSPTSQSCSSGKRLS. Serine 762, serine 764, serine 765, serine 770, serine 771, serine 792, serine 799, serine 811, serine 819, serine 821, and serine 822 each carry phosphoserine. 4 WD repeats span residues 831–888, 897–968, 973–1017, and 1031–1054; these read ITAL…SGTF, TFSC…QTCL, ITET…LDVN, and CFTNEGQALYLVSPTEIQRLTYSQ. Threonine 1092 is subject to Phosphothreonine. The region spanning 1120–1180 is the v-SNARE coiled-coil homology domain; it reads SIEGMKGAAG…HELMLKYKDK (61 aa).

Belongs to the WD repeat L(2)GL family. Interacts with STX1A and STX4. Phosphorylated, leading to STXBP5L increased turnover and subsequent de-repression of insulin secretion. Phosphorylated on serine residues in response to glucose or phorbol esters. In terms of processing, ubiquitinated by the E3 ligase SYVN1, leading to STXBP5L proteasomal degradation. In terms of tissue distribution, detected in hippocampus and cerebellum. Expressed in pancreatic beta-cells where it modulates insulin secretion.

The protein resides in the cytoplasm. It is found in the cell membrane. It localises to the membrane. Functionally, plays a role in vesicle trafficking and exocytosis inhibition. In pancreatic beta-cells, inhibits insulin secretion probably by interacting with and regulating STX1A and STX4, key t-SNARE proteins involved in the fusion of insulin granules to the plasma membrane. Also plays a role in neurotransmitter release by inhibiting basal acetylcholine release from axon terminals and by preventing synaptic fatigue upon repetitive stimulation. Promotes as well axonal outgrowth. This Mus musculus (Mouse) protein is Syntaxin-binding protein 5-like (Stxbp5l).